The following is a 98-amino-acid chain: NADH-ubiquinone oxidoreductase chain 4L (98 aa).

The next 3 membrane-spanning stretches (helical) occupy residues 1-21 (MPYI…GTLM), 29-49 (SLLC…LLSL), and 61-81 (LILL…LIMI).

This sequence belongs to the complex I subunit 4L family. In terms of assembly, core subunit of respiratory chain NADH dehydrogenase (Complex I) which is composed of 45 different subunits.

The protein resides in the mitochondrion inner membrane. The enzyme catalyses a ubiquinone + NADH + 5 H(+)(in) = a ubiquinol + NAD(+) + 4 H(+)(out). Core subunit of the mitochondrial membrane respiratory chain NADH dehydrogenase (Complex I) which catalyzes electron transfer from NADH through the respiratory chain, using ubiquinone as an electron acceptor. Part of the enzyme membrane arm which is embedded in the lipid bilayer and involved in proton translocation. The chain is NADH-ubiquinone oxidoreductase chain 4L (MT-ND4L) from Mammuthus primigenius (Siberian woolly mammoth).